Here is a 295-residue protein sequence, read N- to C-terminus: Fructose-bisphosphate aldolase class 1 (295 aa).

E176 serves as the catalytic Proton acceptor. Catalysis depends on K213, which acts as the Schiff-base intermediate with dihydroxyacetone-P.

It belongs to the class I fructose-bisphosphate aldolase family.

The catalysed reaction is beta-D-fructose 1,6-bisphosphate = D-glyceraldehyde 3-phosphate + dihydroxyacetone phosphate. It participates in carbohydrate degradation; glycolysis; D-glyceraldehyde 3-phosphate and glycerone phosphate from D-glucose: step 4/4. The protein is Fructose-bisphosphate aldolase class 1 of Treponema denticola (strain ATCC 35405 / DSM 14222 / CIP 103919 / JCM 8153 / KCTC 15104).